The following is a 555-amino-acid chain: CD166 antigen homolog (555 aa).

The first 22 residues, 1 to 22, serve as a signal peptide directing secretion; sequence MQSVVCLIGAFIAAAVFRPGSC. Ig-like V-type domains are found at residues 23-127 and 131-229; these read VGTV…EVKV and PSAP…DQVS. Over 23 to 499 the chain is Extracellular; it reads VGTVIGLYGE…NEDGTEQAKV (477 aa). 3 disulfide bridges follow: cysteine 38/cysteine 110, cysteine 154/cysteine 217, and cysteine 263/cysteine 306. Residues asparagine 92 and asparagine 171 are each glycosylated (N-linked (GlcNAc...) asparagine). 3 Ig-like C2-type domains span residues 239–323, 319–397, and 406–484; these read PTEK…VTVS, FVTV…RSLS, and PKIT…KEIS. Asparagine 350, asparagine 441, and asparagine 465 each carry an N-linked (GlcNAc...) asparagine glycan. The cysteines at positions 426 and 470 are disulfide-linked. Residues 500-520 form a helical membrane-spanning segment; the sequence is IVGIVVGLLVAAALVGLIYWI. Topologically, residues 521–555 are cytoplasmic; that stretch reads YIKKTRQGSWKTGEKEAGTSEESKKLEENNHKPDV. The interval 529–555 is disordered; the sequence is SWKTGEKEAGTSEESKKLEENNHKPDV. A compositionally biased stretch (basic and acidic residues) spans 532–555; sequence TGEKEAGTSEESKKLEENNHKPDV.

As to quaternary structure, homodimer. Interacts (via extracellular domain) with CD6 (via extracellular domain). Homodimerization and interaction with CD6 involve the same region and cannot occur simultaneously. The affinity for CD6 is much higher than the affinity for self-association. In terms of tissue distribution, present on all retinal ganglion cells (RGCS) and their axons (in embryo). Absent from mature axons along most of their length, but is present on new and growing axons derived from the RGCS at the retinal margin. Remains on adult RGCS only at cell-cell contact sites and is continuously found in the retinal axon terminal arbor layers of the adult tectum.

It localises to the cell membrane. Its subcellular location is the cell projection. The protein resides in the axon. The protein localises to the dendrite. Functionally, cell adhesion molecule that mediates both heterotypic cell-cell contacts via its interaction with CD6, as well as homotypic cell-cell contacts. Promotes T-cell activation and proliferation via its interactions with CD6. Contributes to the formation and maturation of the immunological synapse via its interactions with CD6. Mediates homotypic interactions with cells that express ALCAM. Mediates attachment of dendritic cells onto endothelial cells via homotypic interaction. Inhibits endothelial cell migration and promotes endothelial tube formation via homotypic interactions. Required for normal organization of the lymph vessel network. Required for normal hematopoietic stem cell engraftment in the bone marrow. Plays a role in hematopoiesis; required for normal numbers of hematopoietic stem cells in bone marrow. Promotes in vitro osteoblast proliferation and differentiation. Promotes neurite extension, axon growth and axon guidance; axons grow preferentially on surfaces that contain ALCAM. Mediates outgrowth and pathfinding for retinal ganglion cell axons. The sequence is that of CD166 antigen homolog (alcam) from Carassius auratus (Goldfish).